Here is a 593-residue protein sequence, read N- to C-terminus: 2-succinyl-5-enolpyruvyl-6-hydroxy-3-cyclohexene-1-carboxylate synthase (593 aa).

Belongs to the TPP enzyme family. MenD subfamily. Homodimer. Mg(2+) is required as a cofactor. It depends on Mn(2+) as a cofactor. Thiamine diphosphate serves as cofactor.

It catalyses the reaction isochorismate + 2-oxoglutarate + H(+) = 5-enolpyruvoyl-6-hydroxy-2-succinyl-cyclohex-3-ene-1-carboxylate + CO2. Its pathway is quinol/quinone metabolism; 1,4-dihydroxy-2-naphthoate biosynthesis; 1,4-dihydroxy-2-naphthoate from chorismate: step 2/7. It functions in the pathway quinol/quinone metabolism; menaquinone biosynthesis. Functionally, catalyzes the thiamine diphosphate-dependent decarboxylation of 2-oxoglutarate and the subsequent addition of the resulting succinic semialdehyde-thiamine pyrophosphate anion to isochorismate to yield 2-succinyl-5-enolpyruvyl-6-hydroxy-3-cyclohexene-1-carboxylate (SEPHCHC). The protein is 2-succinyl-5-enolpyruvyl-6-hydroxy-3-cyclohexene-1-carboxylate synthase of Pelodictyon phaeoclathratiforme (strain DSM 5477 / BU-1).